Here is a 321-residue protein sequence, read N- to C-terminus: Lipoyl synthase (321 aa).

Cys-68, Cys-73, Cys-79, Cys-94, Cys-98, Cys-101, and Ser-308 together coordinate [4Fe-4S] cluster. In terms of domain architecture, Radical SAM core spans 80–297 (FNHGTATFMI…KALADELGFT (218 aa)).

Belongs to the radical SAM superfamily. Lipoyl synthase family. The cofactor is [4Fe-4S] cluster.

The protein resides in the cytoplasm. It catalyses the reaction [[Fe-S] cluster scaffold protein carrying a second [4Fe-4S](2+) cluster] + N(6)-octanoyl-L-lysyl-[protein] + 2 oxidized [2Fe-2S]-[ferredoxin] + 2 S-adenosyl-L-methionine + 4 H(+) = [[Fe-S] cluster scaffold protein] + N(6)-[(R)-dihydrolipoyl]-L-lysyl-[protein] + 4 Fe(3+) + 2 hydrogen sulfide + 2 5'-deoxyadenosine + 2 L-methionine + 2 reduced [2Fe-2S]-[ferredoxin]. It functions in the pathway protein modification; protein lipoylation via endogenous pathway; protein N(6)-(lipoyl)lysine from octanoyl-[acyl-carrier-protein]: step 2/2. Its function is as follows. Catalyzes the radical-mediated insertion of two sulfur atoms into the C-6 and C-8 positions of the octanoyl moiety bound to the lipoyl domains of lipoate-dependent enzymes, thereby converting the octanoylated domains into lipoylated derivatives. In Shewanella putrefaciens (strain CN-32 / ATCC BAA-453), this protein is Lipoyl synthase.